We begin with the raw amino-acid sequence, 122 residues long: Large ribosomal subunit protein uL14 (122 aa).

It belongs to the universal ribosomal protein uL14 family. In terms of assembly, part of the 50S ribosomal subunit. Forms a cluster with proteins L3 and L19. In the 70S ribosome, L14 and L19 interact and together make contacts with the 16S rRNA in bridges B5 and B8.

Binds to 23S rRNA. Forms part of two intersubunit bridges in the 70S ribosome. The protein is Large ribosomal subunit protein uL14 of Kocuria rhizophila (strain ATCC 9341 / DSM 348 / NBRC 103217 / DC2201).